The sequence spans 107 residues: UPF0122 protein EAT1b_2891 (107 aa).

Belongs to the UPF0122 family.

Might take part in the signal recognition particle (SRP) pathway. This is inferred from the conservation of its genetic proximity to ftsY/ffh. May be a regulatory protein. The protein is UPF0122 protein EAT1b_2891 of Exiguobacterium sp. (strain ATCC BAA-1283 / AT1b).